A 642-amino-acid polypeptide reads, in one-letter code: Threonine--tRNA ligase (642 aa).

The 61-residue stretch at 1–61 (MPAITLPDGS…AADAQVVFVT (61 aa)) folds into the TGS domain. Positions 243–536 (DHRRLGKEMD…LIEQYAGRFP (294 aa)) are catalytic. Cys336, His387, and His513 together coordinate Zn(2+).

It belongs to the class-II aminoacyl-tRNA synthetase family. In terms of assembly, homodimer. Zn(2+) serves as cofactor.

The protein resides in the cytoplasm. The catalysed reaction is tRNA(Thr) + L-threonine + ATP = L-threonyl-tRNA(Thr) + AMP + diphosphate + H(+). Catalyzes the attachment of threonine to tRNA(Thr) in a two-step reaction: L-threonine is first activated by ATP to form Thr-AMP and then transferred to the acceptor end of tRNA(Thr). Also edits incorrectly charged L-seryl-tRNA(Thr). In Granulibacter bethesdensis (strain ATCC BAA-1260 / CGDNIH1), this protein is Threonine--tRNA ligase.